A 580-amino-acid polypeptide reads, in one-letter code: Viral transcription factor IE2 (580 aa).

Residues 1 to 11 (MESSAKRKMDP) show a composition bias toward basic and acidic residues. Disordered stretches follow at residues 1–30 (MESSAKRKMDPDNPDEGPSSKVPRPETPVT) and 99–161 (DSSS…VIIK). Residues 99–133 (DSSSTGPTLTTHSCSVSSAPLNKPTPTSVAVTNTP) are compositionally biased toward polar residues. Residues lysine 175 and lysine 180 each participate in a glycyl lysine isopeptide (Lys-Gly) (interchain with G-Cter in SUMO) cross-link. Positions 199–202 (CIVI) match the SUMO-interacting motif 1/SIM1 motif. The segment at 200–208 (IVISDSEEE) is non-covalent SUMO1 binding region (SIM). 2 positions are modified to phosphoserine: serine 203 and serine 205. Residues 206–336 (EEEQGEEVET…SKRISELDNE (131 aa)) form a disordered region. Composition is skewed to low complexity over residues 216–236 (RGATASSPSTGSGTPRVTSPT), 259–271 (SSSSSSSCSSASD), and 302–317 (AASSSLLSCGHQSSGG). The SUMO-interacting motif 1/SIM2 signature appears at 410–413 (IQII). An SUMO-interacting motif 1/SIM3 motif is present at residues 501-504 (VDLL).

Belongs to the HHV-5 IE2 protein family. As to quaternary structure, interacts with host SUMO-modified form of TATA-binding protein (TBP)-associated factor 12/TAF12 in a SIM-dependent manner; this interaction increases the transactivation activity of IE2. Interacts with host CHAF1A. Interacts with several components of the host transcriptional machinery including TBP, TF2B and CREB1. Interacts with host DNA replication licensing factor MCM3. Interacts with host PLSCR1; this interaction inhibits IE2 transactivating activity. Phosphorylated by host CK2 at Ser-203 and Ser-205; leading to enhanced SUMOylation. Post-translationally, SUMOylated; SUMOylation is enhanced when IE2 is phosphorylated by host CK2. The sumoylation is necessary for efficient replication of the virus and thus for the function of this viral transcription factor.

It is found in the host nucleus. In terms of biological role, stimulates viral early and late gene expression and thus play a crucial role in the regulation of productive infection. Selectively drives host RNA Pol II transcription initiation at a subset of viral early-late and late promoters without substantially affecting Pol II transcription of expressed host genes. Mechanistically, forms a repressive complex at the major immediate-early promoter region involving direct association with host nucleosomes and TBP. Concerning activation, stimulates transcription by binding nearby, but not within, core promoter regions. In addition, activates quiescent cells to reenter the cell cycle and up-regulates several E2F-responsive genes, which are responsible for pushing the cell into S phase. In S-phase, inhibits cellular DNA synthesis and blocks further cell cycle progression. In Homo sapiens (Human), this protein is Viral transcription factor IE2 (UL122).